A 247-amino-acid polypeptide reads, in one-letter code: Synaptonemal complex central element protein 1-like (247 aa).

A coiled-coil region spans residues 71–196 (SEELGEAQAL…LQEARETWDS (126 aa)). Positions 189 to 247 (EARETWDSPGNCGLKTELEELEGQSQRSPEAQNDKGEASQEEQHHLETSEELPRTGTLC) are disordered. The span at 220–241 (QNDKGEASQEEQHHLETSEELP) shows a compositional bias: basic and acidic residues.

The protein belongs to the SYCE family. As to expression, isoform 1 is abundantly expressed in testis and weakly in ovary, it is not found in other tissues. Isoform 2 is expressed in testis and poorly in brain, heart, lung and other examined tissues.

Its function is as follows. May be involved in meiosis. Isoform 1 may be involved in meiosis during spermatogenesis while isoform 2 is probably related to a later stage of meiosis, in the development stage of secondary spermatocytes and spermatids. In Mus musculus (Mouse), this protein is Synaptonemal complex central element protein 1-like (Syce1l).